The sequence spans 308 residues: D-alanine--D-alanine ligase (308 aa).

Residues 103–302 form the ATP-grasp domain; the sequence is KTVMATAGVP…FDELVQWMVE (200 aa). 130 to 184 provides a ligand contact to ATP; sequence MAPPYVIKPVADGSSVGVFIVTEDQAHPPQELFRDDWPHGEELLVEKYIAGRELT. Mg(2+)-binding residues include Asp252, Glu269, and Asn271.

This sequence belongs to the D-alanine--D-alanine ligase family. It depends on Mg(2+) as a cofactor. Mn(2+) serves as cofactor.

Its subcellular location is the cytoplasm. It catalyses the reaction 2 D-alanine + ATP = D-alanyl-D-alanine + ADP + phosphate + H(+). The protein operates within cell wall biogenesis; peptidoglycan biosynthesis. In terms of biological role, cell wall formation. The protein is D-alanine--D-alanine ligase of Afipia carboxidovorans (strain ATCC 49405 / DSM 1227 / KCTC 32145 / OM5) (Oligotropha carboxidovorans).